The following is a 53-amino-acid chain: Large ribosomal subunit protein bL32 (53 aa).

Residues 1–20 are compositionally biased toward basic residues; the sequence is MAVPKRRVSHTRAAKRRTHY. The disordered stretch occupies residues 1-53; that stretch reads MAVPKRRVSHTRAAKRRTHYKLTLPMPVKDADGTWRMPHHMNMTTGEYKTTKA. Polar residues predominate over residues 42 to 53; sequence NMTTGEYKTTKA.

This sequence belongs to the bacterial ribosomal protein bL32 family.

The polypeptide is Large ribosomal subunit protein bL32 (Sulfurovum sp. (strain NBC37-1)).